A 308-amino-acid polypeptide reads, in one-letter code: Elongation factor Ts (308 aa).

The interval 80 to 83 (TDFV) is involved in Mg(2+) ion dislocation from EF-Tu.

It belongs to the EF-Ts family.

It localises to the cytoplasm. Functionally, associates with the EF-Tu.GDP complex and induces the exchange of GDP to GTP. It remains bound to the aminoacyl-tRNA.EF-Tu.GTP complex up to the GTP hydrolysis stage on the ribosome. The chain is Elongation factor Ts from Rhodopseudomonas palustris (strain BisB18).